Consider the following 522-residue polypeptide: Maturase K (522 aa).

Belongs to the intron maturase 2 family. MatK subfamily.

Its subcellular location is the plastid. The protein resides in the chloroplast. Usually encoded in the trnK tRNA gene intron. Probably assists in splicing its own and other chloroplast group II introns. In Sapindus saponaria (Soapberry), this protein is Maturase K.